The chain runs to 2196 residues: Non-reducing polyketide synthase CTB1 (2196 aa).

The tract at residues 11 to 250 is N-terminal acylcarrier protein transacylase domain (SAT); the sequence is AFGDQTYDCS…TRLPITAPYH (240 aa). The 434-residue stretch at 381 to 814 folds into the Ketosynthase family 3 (KS3) domain; it reads KSPIAILAAS…GGNTCLVLED (434 aa). Catalysis depends on for beta-ketoacyl synthase activity residues Cys-553, His-688, and His-733. The interval 922 to 1223 is malonyl-CoA:ACP transacylase (MAT) domain; it reads AFTGQGSAFA…QTFASINKDK (302 aa). Residues 1298 to 1611 are product template (PT) domain; sequence SSSIHKVITN…VPKRLMHYIV (314 aa). Residues 1302–1441 form an N-terminal hotdog fold region; the sequence is HKVITNTITA…EKTALKSAAL (140 aa). The 307-residue stretch at 1302–1608 folds into the PKS/mFAS DH domain; sequence HKVITNTITA…LQGVPKRLMH (307 aa). His-1335 (proton acceptor; for dehydratase activity) is an active-site residue. The tract at residues 1460 to 1608 is C-terminal hotdog fold; sequence TYRFSKGMIY…LQGVPKRLMH (149 aa). The active-site Proton donor; for dehydratase activity is Asp-1520. A disordered region spans residues 1617-1666; sequence KASGPPTEKKTSSPPVEKKASAPVAPTRPAIQRKNASIPPPATQVTPQNK. Residues 1623 to 1636 show a composition bias toward basic and acidic residues; sequence TEKKTSSPPVEKKA. Carrier domains lie at 1671–1748 and 1775–1857; these read PSVS…TRLS and DPSP…SGST. O-(pantetheine 4'-phosphoryl)serine is present on residues Ser-1708 and Ser-1816. Residues 1856–1867 are compositionally biased toward polar residues; sequence STESFDSTTTKP. Residues 1856–1923 form a disordered region; the sequence is STESFDSTTT…PPKGRIPPAW (68 aa). The span at 1872 to 1887 shows a compositional bias: low complexity; that stretch reads ATPPLTDSSASSPPSS. The interval 1937–2187 is thioesterase (TE) domain; that stretch reads ILFLFPDGAG…SGAQMLVEHM (251 aa).

Requires pantetheine 4'-phosphate as cofactor.

It catalyses the reaction 6 malonyl-CoA + acetyl-CoA + 6 H(+) = nor-toralactone + 6 CO2 + 7 CoA + 2 H2O. The protein operates within mycotoxin biosynthesis. In terms of biological role, polyketide synthase; part of the gene cluster that mediates the biosynthesis of cercosporin, a light-activated, non-host-selective toxin. The perylenequinone chromophore of cercosporin absorbs light energy to attain an electronically-activated triplet state and produces active oxygen species such as the hydroxyl radical, superoxide, hydrogen peroxide or singlet oxygen upon reaction with oxygen molecules. These reactive oxygen species cause damage to various cellular components including lipids, proteins and nucleic acids. The first step of cercosporin biosynthesis is performed by the polyketide synthase CTB1 which catalyzes the formation of nor-toralactone. The starter unit acyltransferase (SAT) domain of CTB1 initiates polyketide extension by the selective utilization of acetyl-CoA, which is elongated to the heptaketide in the beta-ketoacyl synthase (KS) domain by successive condensations with six malonyl units introduced by the malonyl acyltransferase (MAT) domain. The product template (PT) domain catalyzes C4-C9 and C2-C11 aldol cyclizations and dehydrations to a trihydroxynaphthalene, which is thought to be delivered to the thioesterase (TE) domain for product release. The bifunctional enzyme CTB3 then methylates nor-toralactone to toralactone before conducting an unusual oxidative aromatic ring opening. The O-methyltransferase CTB2 further methylates the nascent OH-6 of the CBT3 product, blocking further oxidation at this site before the reductase CTB6 reduces the 2-oxopropyl ketone at position C7, giving naphthalene. The FAD-dependent monooxygenase CTB5 in concert with the multicopper oxidase CTB12 are responsible for homodimerization of naphthalene with CTB7 installing the dioxepine moiety, finally producing cercosporin. The fasciclin domain-containing protein CTB11 might act with CTB5 and CTB12 whereas the roles of CTB9 and CTB10 have still to be elucidated. The polypeptide is Non-reducing polyketide synthase CTB1 (Cercospora nicotianae (Barn spot disease fungus)).